Reading from the N-terminus, the 122-residue chain is Large ribosomal subunit protein uL14 (122 aa).

Belongs to the universal ribosomal protein uL14 family. In terms of assembly, part of the 50S ribosomal subunit. Forms a cluster with proteins L3 and L19. In the 70S ribosome, L14 and L19 interact and together make contacts with the 16S rRNA in bridges B5 and B8.

Its function is as follows. Binds to 23S rRNA. Forms part of two intersubunit bridges in the 70S ribosome. This is Large ribosomal subunit protein uL14 from Phenylobacterium zucineum (strain HLK1).